Consider the following 483-residue polypeptide: Isocitrate dehydrogenase [NADP] (483 aa).

Thr-74 serves as a coordination point for NADP(+). Residues Ser-83, Asn-85, Arg-89, Arg-99, and Arg-121 each coordinate D-threo-isocitrate. Mg(2+) is bound at residue Asp-232. NADP(+) is bound by residues His-264 to Ile-270 and Asn-277.

This sequence belongs to the isocitrate and isopropylmalate dehydrogenases family. In terms of assembly, homodimer. Mg(2+) is required as a cofactor. Mn(2+) serves as cofactor.

It catalyses the reaction D-threo-isocitrate + NADP(+) = 2-oxoglutarate + CO2 + NADPH. Its function is as follows. Catalyzes the oxidative decarboxylation of isocitrate to 2-oxoglutarate and carbon dioxide with the concomitant reduction of NADP(+). The protein is Isocitrate dehydrogenase [NADP] (icd) of Rickettsia prowazekii (strain Madrid E).